The sequence spans 1085 residues: Protein CROWDED NUCLEI 3 (1085 aa).

2 coiled-coil regions span residues 51 to 149 (DEAS…NDLK) and 185 to 695 (RERA…LDVL). A Glycyl lysine isopeptide (Lys-Gly) (interchain with G-Cter in ubiquitin) cross-link involves residue Lys-318. The short motif at 404–411 (AKREAALE) is the Nuclear localization signal element. Lys-661 is covalently cross-linked (Glycyl lysine isopeptide (Lys-Gly) (interchain with G-Cter in ubiquitin)). Ser-764, Ser-787, Ser-825, and Ser-843 each carry phosphoserine. 2 disordered regions span residues 801–997 (TVKL…GKAE) and 1020–1077 (NNTG…SIGK). Positions 813–825 (SLDRVSGEDHEPS) are enriched in basic and acidic residues. A compositionally biased stretch (basic residues) spans 854 to 868 (RRGRGRGRGRGKSVR). Positions 877–897 (VSRDSKPSDGETPRKRQREQT) are enriched in basic and acidic residues. Ser-910 is subject to Phosphoserine. Residues 932–941 (VSQTPGQTRY) are compositionally biased toward polar residues. Residues 949 to 995 (VGTEEDKAQASKGATEKQERVNDDIRKVPSPKETRTPPEGENRENGK) are compositionally biased toward basic and acidic residues. Over residues 1045–1066 (EEDDENISMIEEENEGEEEEET) the composition is skewed to acidic residues.

Belongs to the CRWN family. In terms of assembly, core component of the LINC complex which is composed of inner nuclear membrane SUN domain-containing proteins coupled to outer nuclear membrane WIP proteins, the nucleoskeletal CRWN/LINC proteins, and, possibly, KAKU4. Expressed at low levels in roots, leaves, flowers and flower stalks.

It localises to the nucleus membrane. The protein resides in the nucleus. Its subcellular location is the nucleoplasm. The protein localises to the cytoplasm. It is found in the nucleus lamina. Its function is as follows. Component of SUN-protein-containing multivariate complexes also called LINC complexes which link the nucleoskeleton and cytoskeleton by providing versatile outer nuclear membrane attachment sites for cytoskeletal filaments. Required for nucleus structure organization (e.g. size and shape). The sequence is that of Protein CROWDED NUCLEI 3 from Arabidopsis thaliana (Mouse-ear cress).